The primary structure comprises 275 residues: Polyamine aminopropyltransferase (275 aa).

The PABS domain maps to 2-235 (ELWFTEKQTK…GLWTFTIGSK (234 aa)). An S-methyl-5'-thioadenosine-binding site is contributed by Q31. Spermidine contacts are provided by H62 and D86. Residues E106 and 137-138 (DG) contribute to the S-methyl-5'-thioadenosine site. D155 serves as the catalytic Proton acceptor. 155-158 (DSTE) serves as a coordination point for spermidine. P162 serves as a coordination point for S-methyl-5'-thioadenosine.

Belongs to the spermidine/spermine synthase family. As to quaternary structure, homodimer or homotetramer.

The protein localises to the cytoplasm. It catalyses the reaction S-adenosyl 3-(methylsulfanyl)propylamine + putrescine = S-methyl-5'-thioadenosine + spermidine + H(+). Its pathway is amine and polyamine biosynthesis; spermidine biosynthesis; spermidine from putrescine: step 1/1. Catalyzes the irreversible transfer of a propylamine group from the amino donor S-adenosylmethioninamine (decarboxy-AdoMet) to putrescine (1,4-diaminobutane) to yield spermidine. This Bacillus cytotoxicus (strain DSM 22905 / CIP 110041 / 391-98 / NVH 391-98) protein is Polyamine aminopropyltransferase.